The chain runs to 87 residues: uncharacterized protein (87 aa).

The 2Fe-2S ferredoxin-type domain occupies 4–87; sequence SIIEITNIKK…KPKGNITIKI (84 aa). 4 residues coordinate [2Fe-2S] cluster: C38, C43, C46, and C75.

It depends on [2Fe-2S] cluster as a cofactor.

This is an uncharacterized protein from Buchnera aphidicola subsp. Acyrthosiphon pisum (strain APS) (Acyrthosiphon pisum symbiotic bacterium).